The primary structure comprises 60 residues: Large ribosomal subunit protein bL32 (60 aa).

Residues M1–R16 show a composition bias toward basic residues. The tract at residues M1–G34 is disordered.

Belongs to the bacterial ribosomal protein bL32 family.

The sequence is that of Large ribosomal subunit protein bL32 from Maricaulis maris (strain MCS10) (Caulobacter maris).